Here is a 267-residue protein sequence, read N- to C-terminus: MASSEETPRSLAGKVALVTGAGRGIGKGIAVELAKRGASVVVNYNSAEKPAQEVVDEIAKTGSRAVAIKADITKVPEVSRLFQEALQHFGHLDIVVSNSGTEVFKPEDEVTEEDYDRVFNLNTRAQFFIAQHAYVHLRNGGRIVLMSSVAANMSGIPNHALYAGSKAAVEGFTRSFAVDAGHKKITVNAIAPGGVKTDMYDANAWHYVPNGKPGMPMEEIDKGLAAFCPLGRVAVPQDIGRVVAFLAHPDSEWVNGQVILLTGGSVT.

4 residues coordinate NADP(+): Ile-25, Asn-45, Asp-71, and Asn-98. Active-site proton donor residues include Ser-147 and Ser-148. Positions 162, 166, 195, and 197 each coordinate NADP(+). The active-site Proton acceptor is Tyr-162. Residue Lys-166 is the Lowers pKa of active site Tyr of the active site.

The protein belongs to the short-chain dehydrogenases/reductases (SDR) family.

Hydroxynaphthalene reductase-like protein; part of the Pks2 gene cluster that mediates the formation of infectious structures (appressoria), enabling these fungi to kill insects faster. The product of the Pks2 gene cluster is different from the one of Pks1 and has still not been identified. In Metarhizium guizhouense (strain ARSEF 977), this protein is Hydroxynaphthalene reductase-like protein Arp2.